Consider the following 79-residue polypeptide: Cytochrome c oxidase assembly factor 6 homolog (79 aa).

A CHCH domain is found at 9–52 (RQACWGARDEYWKCLDENTEDASKCKKLRSSFESSCPQQWIKYF). A Cx9C motif motif is present at residues 12–22 (CWGARDEYWKC). 2 cysteine pairs are disulfide-bonded: C12-C44 and C22-C33. A Cx10C motif motif is present at residues 33-44 (CKKLRSSFESSC).

This sequence belongs to the cytochrome c oxidase subunit 6B family. As to quaternary structure, found in a complex with TMEM177, COX20, MT-CO2/COX2, COX18, SCO1 and SCO2. Interacts with COA1, MT-CO2/COX2, SCO1, SCO2 and COX20. Interacts with COX20 in a MT-CO2/COX2- and COX18-dependent manner. Interacts with COX16.

Its subcellular location is the mitochondrion intermembrane space. In terms of biological role, involved in the maturation of the mitochondrial respiratory chain complex IV subunit MT-CO2/COX2. Thereby, may regulate early steps of complex IV assembly. Mitochondrial respiratory chain complex IV or cytochrome c oxidase is the component of the respiratory chain that catalyzes the transfer of electrons from intermembrane space cytochrome c to molecular oxygen in the matrix and as a consequence contributes to the proton gradient involved in mitochondrial ATP synthesis. May also be required for efficient formation of respiratory supercomplexes comprised of complexes III and IV. This Bos taurus (Bovine) protein is Cytochrome c oxidase assembly factor 6 homolog (COA6).